Here is a 419-residue protein sequence, read N- to C-terminus: UDP-N-acetylglucosamine 1-carboxyvinyltransferase (419 aa).

A phosphoenolpyruvate-binding site is contributed by 22–23 (KN). Arg92 contacts UDP-N-acetyl-alpha-D-glucosamine. Cys116 (proton donor) is an active-site residue. A 2-(S-cysteinyl)pyruvic acid O-phosphothioketal modification is found at Cys116. Residues 121-125 (RPIDL), Asp306, and Ile328 each bind UDP-N-acetyl-alpha-D-glucosamine.

Belongs to the EPSP synthase family. MurA subfamily.

It localises to the cytoplasm. The enzyme catalyses phosphoenolpyruvate + UDP-N-acetyl-alpha-D-glucosamine = UDP-N-acetyl-3-O-(1-carboxyvinyl)-alpha-D-glucosamine + phosphate. It participates in cell wall biogenesis; peptidoglycan biosynthesis. Its function is as follows. Cell wall formation. Adds enolpyruvyl to UDP-N-acetylglucosamine. Target for the antibiotic fosfomycin. This is UDP-N-acetylglucosamine 1-carboxyvinyltransferase from Streptococcus pneumoniae (strain Hungary19A-6).